Consider the following 334-residue polypeptide: O(6)-methylguanine-induced apoptosis 2 (334 aa).

Residues 1–60 are disordered; the sequence is MDNSAQKNERTGKHPRRASEVQKGFTAAYPTQSSIPFKSQASVIPESEKKGFNSQAKRFP. Basic and acidic residues predominate over residues 7-20; sequence KNERTGKHPRRASE. The segment covering 29–42 has biased composition (polar residues); it reads YPTQSSIPFKSQAS. STPGR repeat units follow at residues 67–74, 109–117, 148–155, 187–206, 225–257, 267–282, and 306–316; these read PGPGFYNV, PAANAYTIP, PAPNYYNA, GPPPGHYDINESLVKQSPNT, GPGPGYYNPSDCTKVPKKTLFPKNPILNFSAQP, PGPGQYEIVDYLGPRK, and LPGPATYKPEL. Tyr72 bears the Phosphotyrosine mark.

This sequence belongs to the STPG1 family.

Its subcellular location is the cytoplasm. The protein resides in the nucleus. May positively contribute to the induction of apoptosis triggered by O(6)-methylguanine. This chain is O(6)-methylguanine-induced apoptosis 2 (STPG1), found in Homo sapiens (Human).